The following is a 174-amino-acid chain: Flavodoxin 1 (174 aa).

Positions 4–168 (IGIFYGSSSG…RLERWIAVLQ (165 aa)) constitute a Flavodoxin-like domain. FMN contacts are provided by residues 10-14 (SSSGV) and 89-122 (LFGAGDYVSHGEQFVSALGVLYDKFKARGAALVG).

FMN is required as a cofactor.

Its function is as follows. Flavodoxins are low-potential electron donors to a number of redox enzymes. AvFld 1 is able to donate electrons to the assimilatory nitrate reductase of A.vinelandii to catalyze the reduction of nitrate to nitrite. In Azotobacter vinelandii (strain DJ / ATCC BAA-1303), this protein is Flavodoxin 1.